Consider the following 866-residue polypeptide: E3 ubiquitin-protein ligase RNF216 (866 aa).

Disordered regions lie at residues 46–117, 131–161, and 211–240; these read LVTP…NPRS, YTESDPLETQNQSSEDSETELLSNLGESAAL, and EFPGPAFPRPEPQQGGISGPSSPQPAHPLG. Acidic residues predominate over residues 55 to 76; sequence EEEDLDDDVILTEDDSEDDYGE. Glycyl lysine isopeptide (Lys-Gly) (interchain with G-Cter in SUMO2) cross-links involve residues L80, T89, and K100. Residues 137–156 show a composition bias toward polar residues; the sequence is LETQNQSSEDSETELLSNLG. Glycyl lysine isopeptide (Lys-Gly) (interchain with G-Cter in SUMO2) cross-links involve residues K351 and K354. Residue S419 is modified to Phosphoserine. Residues K425, K430, K448, K459, and K485 each participate in a glycyl lysine isopeptide (Lys-Gly) (interchain with G-Cter in SUMO2) cross-link. The stretch at 475-491 forms a coiled coil; that stretch reads VQQEQEFYEQKIKEMAE. The TRIAD supradomain stretch occupies residues 511–728; sequence QLIECRCCYG…SPGAPCQECS (218 aa). Zn(2+)-binding residues include C515, C518, C537, C540, C605, and C608. The segment at 515–564 adopts an RING-type 1 zinc-finger fold; the sequence is CRCCYGEFPFEELTQCADAHLFCKECLIRYAQEAVFGSGKLELSCMEGSC. The IBR-type zinc finger occupies 583–648; that stretch reads YKYYERKAEE…LWKEHNGLTC (66 aa). Residue K619 forms a Glycyl lysine isopeptide (Lys-Gly) (interchain with G-Cter in SUMO2) linkage. Zn(2+) is bound by residues C623, C628, C633, C636, H643, and C648. Glycyl lysine isopeptide (Lys-Gly) (interchain with G-Cter in SUMO2) cross-links involve residues K658 and K666. Positions 675 and 678 each coordinate Zn(2+). The RING-type 2; atypical zinc finger occupies 675-703; sequence CHKCGTGLIKSEGCNRMSCRCGAQMCYLC. The active site involves C688. The Zn(2+) site is built by C693, C695, C700, C703, and H716. S719 bears the Phosphoserine; by MAPK1 mark. C724 lines the Zn(2+) pocket. A coiled-coil region spans residues 737–763; sequence TEDDEKLIEEIQKEAEEEQKRKNGENT. Glycyl lysine isopeptide (Lys-Gly) (interchain with G-Cter in SUMO2) cross-links involve residues K765 and K773.

Interacts with UBE2L3 and to some extent with UBE2L6. Interacts with TRAF3, TLR3, TLR4, TLR5 and TLR9. Isoform 3/ZIN binds RIPK1. In terms of assembly, (Microbial infection) Isoform 3/ZIN binds RIPK1 and HIV Vif. In terms of processing, auto-ubiquitinated. Post-translationally, phosphorylation at Ser-719 enhances acceptor ubiquitin binding and chain-type specificity towards 'Lys-63' di-ubiquitin but not di-ubiquitin with other linkage types. In terms of tissue distribution, ubiquitous, with the highest levels of expression in testis and peripheral blood leukocytes.

The protein resides in the cytoplasm. It is found in the cytoplasmic vesicle. The protein localises to the clathrin-coated vesicle. It catalyses the reaction S-ubiquitinyl-[E2 ubiquitin-conjugating enzyme]-L-cysteine + [acceptor protein]-L-lysine = [E2 ubiquitin-conjugating enzyme]-L-cysteine + N(6)-ubiquitinyl-[acceptor protein]-L-lysine.. The protein operates within protein modification; protein ubiquitination. Its activity is regulated as follows. Allosterically activated by 'Lys-63'-linked di-ubiquitin. Functionally, E3 ubiquitin ligase which accepts ubiquitin from specific E2 ubiquitin-conjugating enzymes, and then transfers it to substrates promoting their ubiquitination. Plays a role in the regulation of antiviral responses by promoting the degradation of TRAF3, TLR4 and TLR9. In turn, down-regulates NF-kappa-B and IRF3 activation as well as beta interferon production. Also participates in the regulation of autophagy by ubiquitinating BECN1 leading to its degradation and autophagy inhibition. Plays a role in ARC-dependent synaptic plasticity by mediating ARC ubiquitination resulting in its rapid proteasomal degradation. Plays aso an essential role in spermatogenesis and male fertility. Mechanistically, regulates meiosis by promoting the degradation of PRKACB through the ubiquitin-mediated lysosome pathway. Modulates the gonadotropin-releasing hormone signal pathway by affecting the stability of STAU2 that is required for the microtubule-dependent transport of neuronal RNA from the cell body to the dendrite. Its function is as follows. Inhibits TNF and IL-1 mediated activation of NF-kappa-B. Promotes TNF and RIP mediated apoptosis. In Homo sapiens (Human), this protein is E3 ubiquitin-protein ligase RNF216 (RNF216).